The following is a 468-amino-acid chain: Anthocyanidin 3-O-glucoside 2'''-O-xylosyltransferase (468 aa).

UDP-alpha-D-xylose-binding positions include Ser284, 344–346 (IQQ), 361–369 (HCGFGSMWE), and 383–386 (HGEQ).

Belongs to the UDP-glycosyltransferase family.

It catalyses the reaction an anthocyanidin 3-O-beta-D-glucoside + UDP-alpha-D-xylose = an anthocyanidin 3-O-beta-D-sambubioside + UDP + 2 H(+). Its pathway is secondary metabolite biosynthesis; flavonoid biosynthesis. Its function is as follows. Contributes to the last few anthocyanin biosynthetic steps. Converts cyanidin 3-O-glucoside to cyanidin 3-O-xylosyl(1-&gt;2)glucoside. Can use 3-O-glucosylated anthocyanidins/flavonols and uridine diphosphate (UDP)-xylose as substrates. This Arabidopsis thaliana (Mouse-ear cress) protein is Anthocyanidin 3-O-glucoside 2'''-O-xylosyltransferase (A3G2XYLT).